A 266-amino-acid chain; its full sequence is Non-structural maintenance of chromosomes element 1 homolog (266 aa).

The interaction with NSMCE3 stretch occupies residues 1 to 102 (MQGSTRRAGA…SVSKMATDFA (102 aa)). Residues 191 to 232 (CNICHGLLIQGQSCETCGIRMHLPCVAKYFQSIPEPHCPHCN) form an RING-type; atypical zinc finger. The tract at residues 246–266 (EKEREAGISKSSRKSLRTRQH) is disordered. Residues 256–266 (SSRKSLRTRQH) are compositionally biased toward basic residues.

This sequence belongs to the NSE1 family. As to quaternary structure, component of the SMC5-SMC6 complex which consists at least of SMC5, SMC6, NSMCE2, NSMCE1, NSMCE4A or EID3 and NSMCE3. NSMCE1, NSMCE4A or EID3 and NSMCE3 probably form a subcomplex that bridges the head domains of the SMC5-SMC6 heterodimer. Interacts with NSMCE3. Ubiquitinated.

Its subcellular location is the nucleus. The protein resides in the chromosome. The protein localises to the telomere. It catalyses the reaction S-ubiquitinyl-[E2 ubiquitin-conjugating enzyme]-L-cysteine + [acceptor protein]-L-lysine = [E2 ubiquitin-conjugating enzyme]-L-cysteine + N(6)-ubiquitinyl-[acceptor protein]-L-lysine.. Functionally, RING-type zinc finger-containing E3 ubiquitin ligase that assembles with melanoma antigen protein (MAGE) to catalyze the direct transfer of ubiquitin from E2 ubiquitin-conjugating enzyme to a specific substrate. Within MAGE-RING ubiquitin ligase complex, MAGE stimulates and specifies ubiquitin ligase activity likely through recruitment and/or stabilization of the E2 ubiquitin-conjugating enzyme at the E3:substrate complex. Involved in maintenance of genome integrity, DNA damage response and DNA repair. NSMCE3/MAGEG1 and NSMCE1 ubiquitin ligase are components of SMC5-SMC6 complex and may positively regulate homologous recombination-mediated DNA repair. This is Non-structural maintenance of chromosomes element 1 homolog (Nsmce1) from Mus musculus (Mouse).